The following is a 170-amino-acid chain: Co-chaperone protein HscB homolog (170 aa).

Residues 5-79 enclose the J domain; it reads DHFSLFGLPA…RARYLCEQAG (75 aa).

This sequence belongs to the HscB family. As to quaternary structure, interacts with HscA and stimulates its ATPase activity.

Co-chaperone involved in the maturation of iron-sulfur cluster-containing proteins. Seems to help targeting proteins to be folded toward HscA. This chain is Co-chaperone protein HscB homolog, found in Bordetella petrii (strain ATCC BAA-461 / DSM 12804 / CCUG 43448).